The primary structure comprises 207 residues: Serotonin N-acetyltransferase (207 aa).

The segment at 1 to 29 (MSTPSVHCLKPSPLHLPSGIPGSPGRQRR) is disordered. The interval 28-35 (RRHTLPAN) is YWHAZ-binding. T31 bears the Phosphothreonine; by PKA mark. An N-acetyltransferase domain is found at 35–196 (NEFRCLTPED…TFTEMHCSLR (162 aa)). Residue L124 coordinates substrate. Residues 124-126 (LAV) and 132-137 (QQGKGS) each bind acetyl-CoA. Position 159 (M159) interacts with substrate. Residue 168–170 (YQR) coordinates acetyl-CoA. Position 205 is a phosphoserine; by PKA (S205).

This sequence belongs to the acetyltransferase family. AANAT subfamily. In terms of assembly, monomer. Interacts with several 14-3-3 proteins, including YWHAB, YWHAE, YWHAG and YWHAZ, preferentially when phosphorylated at Thr-31. Phosphorylation on Ser-205 also allows binding to YWHAZ, but with a 10-fold lower affinity. The interaction with YWHAZ considerably increases affinity for arylalkylamines and acetyl-CoA and protects the enzyme from dephosphorylation and proteasomal degradation. It may also prevent thiol-dependent inactivation. The physiological stoichiometry of the interaction is not clear. In vitro studies show either 1:2 (i.e. 1 AANAT molecule per YWHAZ dimer) or 2:2. Post-translationally, cAMP-dependent phosphorylation on both N-terminal Thr-31 and C-terminal Ser-205 regulates AANAT activity by promoting interaction with 14-3-3 proteins. Highest expression in the pineal gland, followed by retina. Expressed at much lower levels in brainstem and pituitary gland. AANAT activity also detected at low levels in the olfactory lobe.

Its subcellular location is the cytoplasm. The catalysed reaction is a 2-arylethylamine + acetyl-CoA = an N-acetyl-2-arylethylamine + CoA + H(+). The protein operates within aromatic compound metabolism; melatonin biosynthesis; melatonin from serotonin: step 1/2. In terms of biological role, controls the night/day rhythm of melatonin production in the pineal gland. Catalyzes the N-acetylation of serotonin into N-acetylserotonin, the penultimate step in the synthesis of melatonin. The chain is Serotonin N-acetyltransferase (AANAT) from Ovis aries (Sheep).